Consider the following 707-residue polypeptide: Trans-feruloyl-CoA synthase FCS1 (707 aa).

Residues His267 and 524–535 contribute to the ATP site; that span reads ARAIGYPVVMKA. The 52-residue stretch at 498–549 folds into the ATP-grasp domain; it reads KELLRPLGIAFPPSQFAANAEAAAAAARAIGYPVVMKAQAAALGHKSDAGGV.

It in the N-terminal section; belongs to the acetate CoA ligase alpha subunit family. This sequence in the C-terminal section; belongs to the acetate CoA ligase beta subunit family. As to quaternary structure, homodimer.

It catalyses the reaction (E)-ferulate + ATP + CoA = (E)-feruloyl-CoA + ADP + phosphate. Catalyzes the formation of feruloyl-CoA, ADP and phosphate from ferulate, CoA and ATP. This is Trans-feruloyl-CoA synthase FCS1 from Unknown prokaryotic organism.